The primary structure comprises 179 residues: Adenine phosphoribosyltransferase (179 aa).

This sequence belongs to the purine/pyrimidine phosphoribosyltransferase family. Homodimer.

Its subcellular location is the cytoplasm. The enzyme catalyses AMP + diphosphate = 5-phospho-alpha-D-ribose 1-diphosphate + adenine. Its pathway is purine metabolism; AMP biosynthesis via salvage pathway; AMP from adenine: step 1/1. Its function is as follows. Catalyzes a salvage reaction resulting in the formation of AMP, that is energically less costly than de novo synthesis. The sequence is that of Adenine phosphoribosyltransferase from Dinoroseobacter shibae (strain DSM 16493 / NCIMB 14021 / DFL 12).